The sequence spans 145 residues: ATP synthase epsilon chain (145 aa).

The protein belongs to the ATPase epsilon chain family. As to quaternary structure, F-type ATPases have 2 components, CF(1) - the catalytic core - and CF(0) - the membrane proton channel. CF(1) has five subunits: alpha(3), beta(3), gamma(1), delta(1), epsilon(1). CF(0) has three main subunits: a, b and c.

It localises to the cell inner membrane. Functionally, produces ATP from ADP in the presence of a proton gradient across the membrane. The sequence is that of ATP synthase epsilon chain from Francisella tularensis subsp. mediasiatica (strain FSC147).